The following is a 474-amino-acid chain: Cyclin-dependent kinase 18 (474 aa).

6 positions are modified to phosphoserine: Ser14, Ser74, Ser89, Ser98, Ser117, and Ser132. Residues 44-87 are disordered; that stretch reads DLQLGPLGRDPLQECSTFSPTDSGEEPGQLSPGVQFQRRQNQRR. One can recognise a Protein kinase domain in the interval 144-425; sequence YVKLDKLGEG…AEAALSHPYF (282 aa). ATP-binding positions include 150–158 and Lys173; that span reads LGEGTYATV. Asp265 serves as the catalytic Proton acceptor. 2 positions are modified to phosphoserine: Ser440 and Ser443.

The protein belongs to the protein kinase superfamily. CMGC Ser/Thr protein kinase family. CDC2/CDKX subfamily.

The enzyme catalyses L-seryl-[protein] + ATP = O-phospho-L-seryl-[protein] + ADP + H(+). It carries out the reaction L-threonyl-[protein] + ATP = O-phospho-L-threonyl-[protein] + ADP + H(+). May play a role in signal transduction cascades in terminally differentiated cells. This chain is Cyclin-dependent kinase 18 (CDK18), found in Pongo abelii (Sumatran orangutan).